Here is a 149-residue protein sequence, read N- to C-terminus: D-aminoacyl-tRNA deacylase (149 aa).

Positions 141 to 142 match the Gly-cisPro motif, important for rejection of L-amino acids motif; the sequence is GP.

The protein belongs to the DTD family. Homodimer.

Its subcellular location is the cytoplasm. The enzyme catalyses glycyl-tRNA(Ala) + H2O = tRNA(Ala) + glycine + H(+). The catalysed reaction is a D-aminoacyl-tRNA + H2O = a tRNA + a D-alpha-amino acid + H(+). In terms of biological role, an aminoacyl-tRNA editing enzyme that deacylates mischarged D-aminoacyl-tRNAs. Also deacylates mischarged glycyl-tRNA(Ala), protecting cells against glycine mischarging by AlaRS. Acts via tRNA-based rather than protein-based catalysis; rejects L-amino acids rather than detecting D-amino acids in the active site. By recycling D-aminoacyl-tRNA to D-amino acids and free tRNA molecules, this enzyme counteracts the toxicity associated with the formation of D-aminoacyl-tRNA entities in vivo and helps enforce protein L-homochirality. This Hydrogenovibrio crunogenus (strain DSM 25203 / XCL-2) (Thiomicrospira crunogena) protein is D-aminoacyl-tRNA deacylase.